A 155-amino-acid polypeptide reads, in one-letter code: Small ribosomal subunit protein uS7c (155 aa).

Belongs to the universal ribosomal protein uS7 family. As to quaternary structure, part of the 30S ribosomal subunit.

It localises to the plastid. It is found in the chloroplast. Functionally, one of the primary rRNA binding proteins, it binds directly to 16S rRNA where it nucleates assembly of the head domain of the 30S subunit. This chain is Small ribosomal subunit protein uS7c (rps7), found in Saruma henryi (Upright wild ginger).